A 235-amino-acid chain; its full sequence is 2-C-methyl-D-erythritol 4-phosphate cytidylyltransferase (235 aa).

The protein belongs to the IspD/TarI cytidylyltransferase family. IspD subfamily.

The catalysed reaction is 2-C-methyl-D-erythritol 4-phosphate + CTP + H(+) = 4-CDP-2-C-methyl-D-erythritol + diphosphate. The protein operates within isoprenoid biosynthesis; isopentenyl diphosphate biosynthesis via DXP pathway; isopentenyl diphosphate from 1-deoxy-D-xylulose 5-phosphate: step 2/6. In terms of biological role, catalyzes the formation of 4-diphosphocytidyl-2-C-methyl-D-erythritol from CTP and 2-C-methyl-D-erythritol 4-phosphate (MEP). The polypeptide is 2-C-methyl-D-erythritol 4-phosphate cytidylyltransferase (Ectopseudomonas mendocina (strain ymp) (Pseudomonas mendocina)).